The sequence spans 743 residues: tRNA(Met) cytidine acetyltransferase TmcA (743 aa).

Residues Q216, 241-250, and R390 each bind ATP; that span reads GRGKSASIGL. One can recognise an N-acetyltransferase domain in the interval 420–604; it reads LKIEDVSQEE…YSVIVIRALS (185 aa). Acetyl-CoA contacts are provided by residues 531–533 and 538–544; these read IAV and QGKGIGS.

It belongs to the RNA cytidine acetyltransferase family. TmcA subfamily.

It is found in the cytoplasm. The catalysed reaction is cytidine(34) in elongator tRNA(Met) + acetyl-CoA + ATP + H2O = N(4)-acetylcytidine(34) in elongator tRNA(Met) + ADP + phosphate + CoA + H(+). Catalyzes the formation of N(4)-acetylcytidine (ac(4)C) at the wobble position of tRNA(Met), by using acetyl-CoA as an acetyl donor and ATP (or GTP). This Saccharolobus islandicus (strain Y.G.57.14 / Yellowstone #1) (Sulfolobus islandicus) protein is tRNA(Met) cytidine acetyltransferase TmcA.